We begin with the raw amino-acid sequence, 231 residues long: Large ribosomal subunit protein uL3 (231 aa).

Position 151 is an N5-methylglutamine (glutamine 151).

This sequence belongs to the universal ribosomal protein uL3 family. In terms of assembly, part of the 50S ribosomal subunit. Forms a cluster with proteins L14 and L19. Methylated by PrmB.

Its function is as follows. One of the primary rRNA binding proteins, it binds directly near the 3'-end of the 23S rRNA, where it nucleates assembly of the 50S subunit. The sequence is that of Large ribosomal subunit protein uL3 from Ehrlichia canis (strain Jake).